A 268-amino-acid chain; its full sequence is Ribosomal RNA small subunit methyltransferase A (268 aa).

Positions 21, 23, 48, 69, 94, and 115 each coordinate S-adenosyl-L-methionine.

This sequence belongs to the class I-like SAM-binding methyltransferase superfamily. rRNA adenine N(6)-methyltransferase family. RsmA subfamily.

Its subcellular location is the cytoplasm. It carries out the reaction adenosine(1518)/adenosine(1519) in 16S rRNA + 4 S-adenosyl-L-methionine = N(6)-dimethyladenosine(1518)/N(6)-dimethyladenosine(1519) in 16S rRNA + 4 S-adenosyl-L-homocysteine + 4 H(+). Specifically dimethylates two adjacent adenosines (A1518 and A1519) in the loop of a conserved hairpin near the 3'-end of 16S rRNA in the 30S particle. May play a critical role in biogenesis of 30S subunits. The polypeptide is Ribosomal RNA small subunit methyltransferase A (Saccharophagus degradans (strain 2-40 / ATCC 43961 / DSM 17024)).